Reading from the N-terminus, the 222-residue chain is Germin-like protein 11-1 (222 aa).

The first 23 residues, 1–23, serve as a signal peptide directing secretion; the sequence is MKLSTVLCCYLLLLGLFAPEIIS. Cys-32 and Cys-49 form a disulfide bridge. The Cupin type-1 domain occupies 72-195; it reads DNMVRSSANI…AMFAPDSEVA (124 aa). Mn(2+) is bound by residues His-111, His-113, Glu-118, and His-157.

This sequence belongs to the germin family. In terms of assembly, oligomer (believed to be a pentamer but probably hexamer).

It localises to the secreted. Its subcellular location is the extracellular space. It is found in the apoplast. May play a role in plant defense. Probably has no oxalate oxidase activity even if the active site is conserved. This Oryza sativa subsp. japonica (Rice) protein is Germin-like protein 11-1.